The chain runs to 384 residues: Glucans biosynthesis protein C (384 aa).

Transmembrane regions (helical) follow at residues 17–37 (AWLM…THSW), 54–74 (FIHA…SYML), 91–111 (VGIP…ILLQ), 140–160 (LWFL…FTWF), 173–193 (AISL…YAAI), 212–232 (FIVM…LAFI), 240–260 (FTTP…AYLL), 274–294 (TESV…FSLG), 311–331 (ASLF…AYIT), and 338–358 (LIGF…LYEI).

This sequence belongs to the acyltransferase 3 family. OpgC subfamily.

The protein resides in the cell membrane. The protein operates within glycan metabolism; osmoregulated periplasmic glucan (OPG) biosynthesis. Functionally, necessary for the succinyl substitution of periplasmic glucans. Could catalyze the transfer of succinyl residues from the cytoplasmic side of the membrane to the nascent glucan backbones on the periplasmic side of the membrane. The protein is Glucans biosynthesis protein C of Salmonella agona (strain SL483).